A 371-amino-acid chain; its full sequence is 2-oxoadipate dioxygenase/decarboxylase, chloroplastic (371 aa).

A chloroplast-targeting transit peptide spans 1-50; that stretch reads MISLHSSAIKASLYGSFPSSLRSTLSVSFSAGSLIRLPSVGKRNLSVVVS. Residues histidine 113 and arginine 117 each coordinate 2-oxoadipate. Position 113 (histidine 113) interacts with Fe(2+). A Fe(2+)-binding site is contributed by histidine 250. 2 residues coordinate 2-oxoadipate: glutamine 296 and tyrosine 320. Residue glutamate 322 participates in Fe(2+) binding.

The protein belongs to the 2-oxoadipate dioxygenase/decarboxylase family. It depends on Fe(2+) as a cofactor.

The protein localises to the plastid. The protein resides in the chloroplast. It catalyses the reaction 2-oxoadipate + O2 = (R)-2-hydroxyglutarate + CO2. Its pathway is amino-acid degradation. Its function is as follows. Catalyzes the decarboxylation and hydroxylation of 2-oxoadipate (2OA) to form D-2-hydroxyglutarate (D-2-HGA). Is involved in a D-lysine catabolic pathway. The protein is 2-oxoadipate dioxygenase/decarboxylase, chloroplastic of Arabidopsis thaliana (Mouse-ear cress).